The primary structure comprises 302 residues: Methionyl-tRNA formyltransferase (302 aa).

107-110 (SDLP) is a (6S)-5,6,7,8-tetrahydrofolate binding site.

This sequence belongs to the Fmt family.

The enzyme catalyses L-methionyl-tRNA(fMet) + (6R)-10-formyltetrahydrofolate = N-formyl-L-methionyl-tRNA(fMet) + (6S)-5,6,7,8-tetrahydrofolate + H(+). Functionally, attaches a formyl group to the free amino group of methionyl-tRNA(fMet). The formyl group appears to play a dual role in the initiator identity of N-formylmethionyl-tRNA by promoting its recognition by IF2 and preventing the misappropriation of this tRNA by the elongation apparatus. The polypeptide is Methionyl-tRNA formyltransferase (Rickettsia massiliae (strain Mtu5)).